We begin with the raw amino-acid sequence, 375 residues long: Chaperone protein DnaJ (375 aa).

In terms of domain architecture, J spans 4 to 68 (DYYEILGVSR…ETRARYDRFG (65 aa)). Residues 135-217 (GGEKEIRISH…CDGKGANQVT (83 aa)) form a CR-type zinc finger. 8 residues coordinate Zn(2+): cysteine 148, cysteine 151, cysteine 165, cysteine 168, cysteine 191, cysteine 194, cysteine 205, and cysteine 208. 4 CXXCXGXG motif repeats span residues 148–155 (CEVCSGSG), 165–172 (CSTCSGSG), 191–198 (CPTCNGTG), and 205–212 (CDACDGKG).

Belongs to the DnaJ family. Homodimer. Zn(2+) serves as cofactor.

It is found in the cytoplasm. Its function is as follows. Participates actively in the response to hyperosmotic and heat shock by preventing the aggregation of stress-denatured proteins and by disaggregating proteins, also in an autonomous, DnaK-independent fashion. Unfolded proteins bind initially to DnaJ; upon interaction with the DnaJ-bound protein, DnaK hydrolyzes its bound ATP, resulting in the formation of a stable complex. GrpE releases ADP from DnaK; ATP binding to DnaK triggers the release of the substrate protein, thus completing the reaction cycle. Several rounds of ATP-dependent interactions between DnaJ, DnaK and GrpE are required for fully efficient folding. Also involved, together with DnaK and GrpE, in the DNA replication of plasmids through activation of initiation proteins. The chain is Chaperone protein DnaJ from Nostoc punctiforme (strain ATCC 29133 / PCC 73102).